The following is a 129-amino-acid chain: MNLIAKLEQEEIERALAGKTIPEFAPGDTVIVNVNVVEGNRKRVQAYEGVVIAKRNRGLNSSFIVRKISSGEGVERTFQTYSPLLASIVVKRRGDVRRAKLYYLRERSGKSARIKEKLVSKDRAAAAQQ.

It belongs to the bacterial ribosomal protein bL19 family.

This protein is located at the 30S-50S ribosomal subunit interface and may play a role in the structure and function of the aminoacyl-tRNA binding site. This is Large ribosomal subunit protein bL19 from Burkholderia mallei (strain NCTC 10247).